A 300-amino-acid chain; its full sequence is Iodotyrosine deiodinase (300 aa).

Residues valine 15–leucine 31 form a helical membrane-spanning segment. Residues arginine 110–arginine 114, serine 138, and serine 138–glycine 139 each bind FMN. The 3,5-diiodo-L-tyrosine site is built by alanine 140, glutamate 167, tyrosine 171, and lysine 192. Residues alanine 140, glutamate 167, tyrosine 171, and lysine 192 each contribute to the 3-iodo-L-tyrosine site. FMN is bound by residues threonine 247 to threonine 249 and arginine 289.

Belongs to the nitroreductase family. FMN serves as cofactor. In terms of processing, may be cleaved at Gln-55. The cleaved form retains catalytic activity.

It is found in the membrane. It catalyses the reaction 2 iodide + L-tyrosine + 2 NADP(+) = 3,5-diiodo-L-tyrosine + 2 NADPH + H(+). It carries out the reaction iodide + L-tyrosine + NADP(+) = 3-iodo-L-tyrosine + NADPH. The enzyme catalyses 3-iodo-L-tyrosine + iodide + NADP(+) = 3,5-diiodo-L-tyrosine + NADPH + H(+). The catalysed reaction is L-tyrosine + chloride + NADP(+) = 3-chloro-L-tyrosine + NADPH. It catalyses the reaction bromide + L-tyrosine + NADP(+) = 3-bromo-L-tyrosine + NADPH. Catalyzes the dehalogenation of halotyrosines such as 3,5-diiodo-L-tyrosine. Likely to also catalyze the dehalogenation of other halotyrosines such as 3-bromo-L-tyrosine, 3-chloro-L-tyrosine and 3-iodo-L-tyrosine. This is Iodotyrosine deiodinase from Daphnia pulex (Water flea).